The following is a 482-amino-acid chain: ATP synthase subunit beta (482 aa).

168–175 contacts ATP; that stretch reads GGAGVGKT.

Belongs to the ATPase alpha/beta chains family. In terms of assembly, F-type ATPases have 2 components, CF(1) - the catalytic core - and CF(0) - the membrane proton channel. CF(1) has five subunits: alpha(3), beta(3), gamma(1), delta(1), epsilon(1). CF(0) has three main subunits: a(1), b(2) and c(9-12). The alpha and beta chains form an alternating ring which encloses part of the gamma chain. CF(1) is attached to CF(0) by a central stalk formed by the gamma and epsilon chains, while a peripheral stalk is formed by the delta and b chains.

It is found in the cell membrane. It carries out the reaction ATP + H2O + 4 H(+)(in) = ADP + phosphate + 5 H(+)(out). In terms of biological role, produces ATP from ADP in the presence of a proton gradient across the membrane. The catalytic sites are hosted primarily by the beta subunits. This chain is ATP synthase subunit beta, found in Corynebacterium urealyticum (strain ATCC 43042 / DSM 7109).